A 202-amino-acid chain; its full sequence is Heart- and neural crest derivatives-expressed protein 1 (202 aa).

One can recognise a bHLH domain in the interval 83–135 (RKGVGGPKKERRRTESINSAFAELRECIPNVPADTKLSKIKTLRLATSYIAYL). Positions 143 to 187 (SQPGEPEGFKAELKKADGRENKRKRETQPEVYSQPLAHGEKKLKG) are disordered. The span at 149–162 (EGFKAELKKADGRE) shows a compositional bias: basic and acidic residues.

In terms of assembly, efficient DNA binding requires dimerization with another bHLH protein.

Its subcellular location is the nucleus. The protein resides in the nucleoplasm. It is found in the nucleolus. In terms of biological role, transcription factor. Plays an essential role in cardiac morphogenesis. In Gallus gallus (Chicken), this protein is Heart- and neural crest derivatives-expressed protein 1 (HAND1).